A 237-amino-acid polypeptide reads, in one-letter code: Tyrosine-protein kinase YwqD (237 aa).

Tyrosine 228 carries the phosphotyrosine; by autocatalysis modification.

This sequence belongs to the CpsD/CapB family. Autophosphorylated in vitro, which inhibits ATPase activity. Dephosphorylated by YwqE in vitro.

It catalyses the reaction L-tyrosyl-[protein] + ATP = O-phospho-L-tyrosyl-[protein] + ADP + H(+). Its function is as follows. May be involved in the regulation of capsular polysaccharide biosynthesis. Autophosphorylates in vitro. Phosphorylates and activates in vitro two UDP-glucose dehydrogenases, YwqF and TuaD, as well as the DNA-binding proteins Ssb and SsbB. The protein is Tyrosine-protein kinase YwqD (ywqD) of Bacillus subtilis (strain 168).